The following is a 30-amino-acid chain: Dicynthaurin (30 aa).

Threonine amide is present on T30.

Homodimer.

The protein resides in the secreted. Its function is as follows. Shows antibacterial activity against both Gram-positive and Gram-negative bacteria. Its antimicrobial activity is optimal at NaCl concentrations below 100 mM, suggesting that the antimicrobial actions of this peptide may take place intracellularly rather than extracellularly. Has no activity against the fungus C.albicans. Has modest hemolytic activity. In Halocynthia aurantium (Sea peach), this protein is Dicynthaurin.